Reading from the N-terminus, the 129-residue chain is UPF0225 protein XOO0258 (129 aa).

Belongs to the UPF0225 family.

The chain is UPF0225 protein XOO0258 from Xanthomonas oryzae pv. oryzae (strain MAFF 311018).